Here is a 312-residue protein sequence, read N- to C-terminus: Olfactory receptor OR51C1 (312 aa).

Over 1 to 26 (MGSNITSTSIIFLLTGVPGLEAFHTW) the chain is Extracellular. The chain crosses the membrane as a helical span at residues 27–47 (ISIPFCFLSVTALLGNSLILF). At 48–66 (ATITQPSLHEPMYYFLSML) the chain is on the cytoplasmic side. A helical membrane pass occupies residues 67 to 87 (SATDLGLSISTLVTMLSIFWF). The Extracellular portion of the chain corresponds to 88 to 99 (NVREISFNACLS). C97 and C179 form a disulfide bridge. The helical transmembrane segment at 100–120 (HMFFIKFFTVMESSVLLAMAF) threads the bilayer. Over 121–143 (DRFVAVSNPLRYAMILTDSRIAQ) the chain is Cytoplasmic. A helical transmembrane segment spans residues 144–164 (IGVASVIRGLLMLTPMVALLI). The Extracellular portion of the chain corresponds to 165-201 (RLSYCHSQVLHHSYCYHPDVMKLSCTDTRINSAVGLT). A helical membrane pass occupies residues 202-222 (AMFSTVGVDLLLILLSYVLII). The Cytoplasmic segment spans residues 223–240 (RTVLSVASPEERKETFST). A helical transmembrane segment spans residues 241–261 (CVSHIVAFAIYYIPLISLSIV). Residues 262–273 (HRFGKQAPAYVH) are Extracellular-facing. Residues 274-294 (TMIANTYLLISPLMNPVIYSV) traverse the membrane as a helical segment. Residues 295 to 312 (KTKQIRRAVIKILHSKET) lie on the Cytoplasmic side of the membrane.

This sequence belongs to the G-protein coupled receptor 1 family.

The protein localises to the membrane. In terms of biological role, odorant receptor. The polypeptide is Olfactory receptor OR51C1 (Homo sapiens (Human)).